The following is a 238-amino-acid chain: Ribosomal RNA large subunit methyltransferase E (238 aa).

Glycine 85, tryptophan 87, aspartate 113, aspartate 129, and aspartate 153 together coordinate S-adenosyl-L-methionine. Lysine 193 serves as the catalytic Proton acceptor.

It belongs to the class I-like SAM-binding methyltransferase superfamily. RNA methyltransferase RlmE family.

The protein localises to the cytoplasm. It catalyses the reaction uridine(2552) in 23S rRNA + S-adenosyl-L-methionine = 2'-O-methyluridine(2552) in 23S rRNA + S-adenosyl-L-homocysteine + H(+). Specifically methylates the uridine in position 2552 of 23S rRNA at the 2'-O position of the ribose in the fully assembled 50S ribosomal subunit. The protein is Ribosomal RNA large subunit methyltransferase E of Ruegeria sp. (strain TM1040) (Silicibacter sp.).